Here is a 215-residue protein sequence, read N- to C-terminus: 3-isopropylmalate dehydratase small subunit (215 aa).

Belongs to the LeuD family. LeuD type 1 subfamily. In terms of assembly, heterodimer of LeuC and LeuD.

It catalyses the reaction (2R,3S)-3-isopropylmalate = (2S)-2-isopropylmalate. It functions in the pathway amino-acid biosynthesis; L-leucine biosynthesis; L-leucine from 3-methyl-2-oxobutanoate: step 2/4. In terms of biological role, catalyzes the isomerization between 2-isopropylmalate and 3-isopropylmalate, via the formation of 2-isopropylmaleate. The chain is 3-isopropylmalate dehydratase small subunit from Hahella chejuensis (strain KCTC 2396).